The sequence spans 72 residues: Translation initiation factor IF-1 (72 aa).

Residues 1 to 72 (MAKDGVIEVE…NRGRITYRYK (72 aa)) form the S1-like domain.

It belongs to the IF-1 family. In terms of assembly, component of the 30S ribosomal translation pre-initiation complex which assembles on the 30S ribosome in the order IF-2 and IF-3, IF-1 and N-formylmethionyl-tRNA(fMet); mRNA recruitment can occur at any time during PIC assembly.

The protein localises to the cytoplasm. Its function is as follows. One of the essential components for the initiation of protein synthesis. Stabilizes the binding of IF-2 and IF-3 on the 30S subunit to which N-formylmethionyl-tRNA(fMet) subsequently binds. Helps modulate mRNA selection, yielding the 30S pre-initiation complex (PIC). Upon addition of the 50S ribosomal subunit IF-1, IF-2 and IF-3 are released leaving the mature 70S translation initiation complex. The polypeptide is Translation initiation factor IF-1 (Bifidobacterium adolescentis (strain ATCC 15703 / DSM 20083 / NCTC 11814 / E194a)).